Here is a 280-residue protein sequence, read N- to C-terminus: Myelin proteolipid protein B (280 aa).

Residues 1–10 (MGWHDGCIRC) are Cytoplasmic-facing. 2 S-palmitoyl cysteine lipidation sites follow: Cys7 and Cys10. A helical transmembrane segment spans residues 11–36 (MVGVPFASVIATVLCFAGVALFCGCG). Topologically, residues 37–59 (HEALSGTEKLIETYFSKNYQEYE) are extracellular. The chain crosses the membrane as a helical span at residues 60–88 (YLIHVINAFQYVIYGIAIFFFLYGILLLA). Topologically, residues 89–152 (EGFYTTTAIK…LGKWLGHPDK (64 aa)) are cytoplasmic. S-palmitoyl cysteine attachment occurs at residues Cys140 and Cys142. Residues 153–179 (FVGVTYVITILWILIFACSAVPVYIYF) traverse the membrane as a helical segment. Residues 180–239 (NTWVTCQSIAFPGKTTTSVSTLCLDARMYGVLPWNAFPGKVCGTSLLAICKTSEFQMTFH) lie on the Extracellular side of the membrane. Disulfide bonds link Cys185-Cys229 and Cys202-Cys221. Residues 240–269 (LFIAAFVGAAATLVALLTYMVGASFNYAVL) traverse the membrane as a helical segment. The Cytoplasmic segment spans residues 270 to 280 (RVTGRSDRSKF).

It belongs to the myelin proteolipid protein family.

Its subcellular location is the cell membrane. Its function is as follows. This is the major myelin protein from the central nervous system. It plays an important role in the formation or maintenance of the multilamellar structure of myelin. This chain is Myelin proteolipid protein B (plp1-b), found in Xenopus laevis (African clawed frog).